Here is a 74-residue protein sequence, read N- to C-terminus: STKNGRDSNSKRLGVKVYGNQPVKAGGIMIRQRGLTFKPGISVSVGKDYTLFATQNGYVQFETINDKKFVSVVG.

This sequence belongs to the bacterial ribosomal protein bL27 family.

Its subcellular location is the plastid. It localises to the chloroplast. The sequence is that of Large ribosomal subunit protein bL27c (rpl27) from Calyptrosphaera sphaeroidea.